The chain runs to 516 residues: BAR/IMD domain-containing adapter protein 2-like 1 (516 aa).

The IMD domain maps to 1–249 (MSRGPEEVNR…MNMIEEIKTP (249 aa)). The stretch at 115-148 (MNATLKRYQAEHRNKLDSLEKSQAELKKIRRKSQ) forms a coiled coil. 2 positions are modified to phosphothreonine: Thr248 and Thr257. Residues Ser261 and Ser281 each carry the phosphoserine modification. The tract at residues 303-328 (NPATAGQSAEKTNNSTANTGDDPSLQ) is disordered. Ser332 is modified (phosphoserine). Positions 340 to 403 (MKKQKVKTIF…PSSYTKLLEE (64 aa)) constitute an SH3 domain. Thr413 carries the post-translational modification Phosphothreonine. 3 positions are modified to phosphoserine: Ser415, Ser421, and Ser423. The segment at 454–516 (ADAAKIPSTS…TNDRSAPIIR (63 aa)) is disordered. Residues 474–485 (ATSTSPSDSNGT) are compositionally biased toward polar residues. Positions 488–516 (PPFLSGENPFATVKLRPTVTNDRSAPIIR) are binds F-actin.

In terms of assembly, interacts with RAC1. Binds to F-actin. Interacts with FASLG. Post-translationally, phosphorylated on tyrosine in response to insulin.

It is found in the cytoplasm. The protein resides in the cytoskeleton. Functionally, may function as adapter protein. Involved in the formation of clusters of actin bundles. Plays a role in the reorganization of the actin cytoskeleton in response to bacterial infection. The chain is BAR/IMD domain-containing adapter protein 2-like 1 (Baiap2l1) from Rattus norvegicus (Rat).